The primary structure comprises 157 residues: Phospholipase A2 phaiodactylipin (157 aa).

The Ca(2+) site is built by Trp-34 and Gly-36. 5 disulfide bridges follow: Cys-35–Cys-56, Cys-55–Cys-94, Cys-62–Cys-87, Cys-85–Cys-127, and Cys-132–Cys-143. The N-linked (GlcNAc...) asparagine glycan is linked to Asn-43. Residue His-59 is part of the active site. Asp-60 contributes to the Ca(2+) binding site. Asp-88 is a catalytic residue. The N-linked (GlcNAc...) asparagine glycan is linked to Asn-101. Positions 134–139 are cleaved as a propeptide — removed in mature form; the sequence is DEKSAR. A glycan (N-linked (GlcNAc...) asparagine) is linked at Asn-153.

This sequence belongs to the phospholipase A2 family. Group III subfamily. In terms of assembly, heterodimer composed of a small subunit and a large subunit; disulfide-linked. The cofactor is Ca(2+). In terms of tissue distribution, expressed by the venom gland.

It is found in the secreted. The enzyme catalyses a 1,2-diacyl-sn-glycero-3-phosphocholine + H2O = a 1-acyl-sn-glycero-3-phosphocholine + a fatty acid + H(+). Functionally, scorpion venom phospholipase A2 (PLA2) that is lethal to crickets and crustaceae. Causes inflammation in mice and lysis of human erythrocytes. Has a mild anticoagulant effect on human platelets. PLA2 catalyzes the calcium-dependent hydrolysis of the 2-acyl groups in 3-sn-phosphoglycerides. This is Phospholipase A2 phaiodactylipin from Anuroctonus phaiodactylus (Mafia scorpion).